The sequence spans 465 residues: Cruciform DNA-recognizing protein 1 (465 aa).

Disordered regions lie at residues 107–227 (EAGG…VPNP) and 247–276 (RLNKKEEVPEPVAGPIVESSVTEKSPALPQ). Over residues 127-151 (NRKKNKRNNKKRRSKLKKKSTKNNK) the composition is skewed to basic residues. 2 positions are modified to phosphoserine: Ser-153 and Ser-156. Acidic residues predominate over residues 156 to 165 (SLDDNEEEDG). The interval 160–161 (NE) is X-DNA-binding. Residues 166–177 (VTGTTTEDVTGT) show a composition bias toward low complexity. Thr-182 bears the Phosphothreonine mark. Phosphoserine is present on Ser-271. At Thr-295 the chain carries Phosphothreonine. Residues 300 to 465 (AVTPLINEPE…FFGKLKKLFK (166 aa)) are disordered. Phosphoserine is present on residues Ser-319 and Ser-343. Over residues 337 to 363 (LVEKRESTEGVLDGSKKVENKAKKDEE) the composition is skewed to basic and acidic residues. At Thr-366 the chain carries Phosphothreonine. Composition is skewed to basic and acidic residues over residues 385-398 (AEGRKSPAVSEEKE) and 404-428 (EKGSKEVKRSETSKEKKPSAKEVKK). Ser-394 carries the phosphoserine modification. Ser-440 carries the post-translational modification Phosphoserine. Over residues 451 to 465 (KKKTGFFGKLKKLFK) the composition is skewed to basic residues.

This sequence belongs to the CRP1/MDG1 family. In terms of processing, cleaved in the vicinity of position 160 to give an X-DNA-binding N-terminal subpeptide and a non-DNA-binding C-terminal subpeptide.

Functionally, cruciform DNA-binding protein which exerts an enhancing effect on the cleavage of cruciform DNA (X-DNA) by endonuclease VII from bacteriophage T4. The polypeptide is Cruciform DNA-recognizing protein 1 (CRP1) (Saccharomyces cerevisiae (strain ATCC 204508 / S288c) (Baker's yeast)).